Consider the following 601-residue polypeptide: DNA replication licensing factor MCM3 (601 aa).

One can recognise an MCM domain in the interval 180-386 (PINLLSKSIA…LDRRLSQHVL (207 aa)). 229-236 (GDPSTAKS) is a binding site for ATP. Residues 361 to 364 (SRFD) carry the Arginine finger motif.

The protein belongs to the MCM family. In terms of assembly, component of the MCM2-7 complex.

It localises to the nucleus. The protein resides in the chromosome. Its subcellular location is the nucleoplasm. The catalysed reaction is ATP + H2O = ADP + phosphate + H(+). Acts as a component of the MCM2-7 complex (MCM complex) which is the replicative helicase essential for DNA replication initiation and elongation in eukaryotic cells. Required for DNA replication and cell proliferation. The active ATPase sites in the MCM2-7 ring are formed through the interaction surfaces of two neighboring subunits such that a critical structure of a conserved arginine finger motif is provided in trans relative to the ATP-binding site of the Walker A box of the adjacent subunit. This Entamoeba histolytica (strain ATCC 30459 / HM-1:IMSS / ABRM) protein is DNA replication licensing factor MCM3.